A 250-amino-acid polypeptide reads, in one-letter code: Ribosomal RNA small subunit methyltransferase J (250 aa).

S-adenosyl-L-methionine contacts are provided by residues 101 to 102 (RD), 117 to 118 (ER), 153 to 154 (SS), and D171.

This sequence belongs to the methyltransferase superfamily. RsmJ family.

It localises to the cytoplasm. The catalysed reaction is guanosine(1516) in 16S rRNA + S-adenosyl-L-methionine = N(2)-methylguanosine(1516) in 16S rRNA + S-adenosyl-L-homocysteine + H(+). Functionally, specifically methylates the guanosine in position 1516 of 16S rRNA. The chain is Ribosomal RNA small subunit methyltransferase J from Shigella flexneri serotype 5b (strain 8401).